A 321-amino-acid polypeptide reads, in one-letter code: UDP-N-acetyl-alpha-D-glucosaminuronate decarboxylase (321 aa).

Gly12, Phe13, Ile14, Asp33, Asn34, Tyr36, Gly38, Leu76, Thr95, Ala117, Tyr148, and Lys152 together coordinate NAD(+). The active-site Proton acceptor is the Tyr148.

This sequence belongs to the NAD(P)-dependent epimerase/dehydratase family. In terms of assembly, homodimer. NAD(+) is required as a cofactor.

It carries out the reaction UDP-2-acetamido-2-deoxy-alpha-D-glucuronate + H(+) = UDP-N-acetyl-alpha-D-xylosamine + CO2. Activity is completely inhibited by NADH but not by NADPH. Its function is as follows. Decarboxylase involved in the biosynthesis of the nucleotide-sugar UDP-N-acetylxylosamine (UDP-XylNAc). Catalyzes the NAD-dependent decarboxylation of UDP-N-acetylglucosaminuronic acid (UDP-GlcNAcA) to UDP-XylNAc. Cannot use other UDP-uronates, such as UDP-glucuronic acid (UDP-GlcA) and UDP-galacturonic acid (UDP-GalA). The sequence is that of UDP-N-acetyl-alpha-D-glucosaminuronate decarboxylase from Bacillus cytotoxicus (strain DSM 22905 / CIP 110041 / 391-98 / NVH 391-98).